Consider the following 400-residue polypeptide: MGSLIQTPSTQTAVVTTAEGRHQVAHGRRVPSCGPRSVLVRIKAVALNATDHKMPARVKREGLTSGCDFAGEVVAVGEQANDEPRRCELPRSWAPGDRVFGVVYGSNPGQPEWGAFAEYVEADPIMLCHVPDGWDWETAASVGGSVHGSVALCLFGDGNLALDYSNLKAQADSSSADAVTNQSPKPESFTKEELRKVVLVYGGSTACGTMALQLLRLAGYTPITTCSPRNFGLVESYGAVAAFDYHSETCATEMKTYTRSSLVAALDCLGNTQSAALCYAALGRAGGRYVALEKYPDSVSATRKLVKPSWVMGPVMFGRELQLADGYSQPADLAARAFACDWYPLAERLVHQERLRAHPVTIAGPSPPVGDKWADAILCGLQELRDGSVSASKLVVPVAA.

NADP(+) is bound at residue Thr-50–Lys-53. Ser-145–Leu-152 serves as a coordination point for substrate. NADP(+)-binding positions include Ser-204–Cys-207, Ser-227–Asn-230, Tyr-245, and Leu-292–Glu-293. Gly-313–Phe-317 is a substrate binding site. Val-389–Ser-390 is a binding site for NADP(+).

It belongs to the zinc-containing alcohol dehydrogenase family. In terms of assembly, monomer.

It participates in mycotoxin biosynthesis. Functionally, trans-enoyl reductase; part of the gene cluster that mediates the biosynthesis of UCS1025A, a member of the pyrrolizidinone family that acts as a strong telomerase inhibitor and displays potent antibacterial and antitumor properties. These compounds share a hemiaminal-containing pyrrolizidinone core fused with a gamma-lactone, giving a furopyrrolizidine that is connected to a decalin fragment. The polyketide synthase module (PKS) of the PKS-NRPS ucsA is responsible for the synthesis of the polyketide backbone via the condensation of an acetyl-CoA starter unit with 6 malonyl-CoA units. The downstream nonribosomal peptide synthetase (NRPS) module then amidates the carboxyl end of the polyketide with a 2S,3S-methylproline derived from L-isoleucine by the 2-oxoglutarate-dependent dioxygenase ucsF which converts L-isoleucine to (4S,5S)-4-methylpyrroline-5-carboxylate that is further converted to 2S,3S-methylproline by the pyrroline-5-carboxylate reductase ucsG. Reductive release of the completed aminoacyl polyketide from the assembly line can form the 3-pyrrolin-2-one structure via an intramolecular Knoevenagel reaction. Because ucsA lacks a designated enoylreductase (ER) domain, the required activity is provided the enoyl reductase ucsL. This keto acyclic precursor is the substrate of the Diels-Alderase ucsH, that catalyzes the Diels-Alder cycloaddition. Oxidation of the 3S-methyl group to a carboxylate by the cytochrome P450 monooxygenase ucsK allows an oxa-Michael cyclization that might involve the reductase/dehydrogenase ucsI and which furnishes the furopyrrolizidine. The oxidase ucsJ likely plays a critical role in stereoselective reduction of the C5-C6 double bond to afford the required R-configured carboxylate group. Further enolization and oxidation at C5 by an unidentified enzyme affords the last intermediate that can undergo oxa-Michael cyclization to yield UCS1025A. The sequence is that of Trans-enoyl reductase ucsL from Acremonium sp.